Here is a 154-residue protein sequence, read N- to C-terminus: Probable cyclic pyranopterin monophosphate synthase (154 aa).

Residues 74–76 (LCH) and 110–111 (ME) contribute to the substrate site. Residue Asp125 is part of the active site.

This sequence belongs to the MoaC family. As to quaternary structure, homohexamer; trimer of dimers.

The enzyme catalyses (8S)-3',8-cyclo-7,8-dihydroguanosine 5'-triphosphate = cyclic pyranopterin phosphate + diphosphate. It functions in the pathway cofactor biosynthesis; molybdopterin biosynthesis. Catalyzes the conversion of (8S)-3',8-cyclo-7,8-dihydroguanosine 5'-triphosphate to cyclic pyranopterin monophosphate (cPMP). This is Probable cyclic pyranopterin monophosphate synthase from Methanosphaerula palustris (strain ATCC BAA-1556 / DSM 19958 / E1-9c).